The chain runs to 66 residues: Large ribosomal subunit protein bL35 (66 aa).

The protein belongs to the bacterial ribosomal protein bL35 family.

This Phenylobacterium zucineum (strain HLK1) protein is Large ribosomal subunit protein bL35.